The following is a 255-amino-acid chain: 5-oxoprolinase subunit A (255 aa).

The protein belongs to the LamB/PxpA family. In terms of assembly, forms a complex composed of PxpA, PxpB and PxpC.

The catalysed reaction is 5-oxo-L-proline + ATP + 2 H2O = L-glutamate + ADP + phosphate + H(+). Its function is as follows. Catalyzes the cleavage of 5-oxoproline to form L-glutamate coupled to the hydrolysis of ATP to ADP and inorganic phosphate. The chain is 5-oxoprolinase subunit A from Corynebacterium efficiens (strain DSM 44549 / YS-314 / AJ 12310 / JCM 11189 / NBRC 100395).